Consider the following 262-residue polypeptide: Glucosamine-6-phosphate deaminase (262 aa).

Catalysis depends on aspartate 63, which acts as the Proton acceptor; for enolization step. Catalysis depends on asparagine 129, which acts as the For ring-opening step. Residue histidine 131 is the Proton acceptor; for ring-opening step of the active site. Glutamate 136 (for ring-opening step) is an active-site residue.

Belongs to the glucosamine/galactosamine-6-phosphate isomerase family. NagB subfamily.

The catalysed reaction is alpha-D-glucosamine 6-phosphate + H2O = beta-D-fructose 6-phosphate + NH4(+). It functions in the pathway amino-sugar metabolism; N-acetylneuraminate degradation; D-fructose 6-phosphate from N-acetylneuraminate: step 5/5. Its function is as follows. Catalyzes the reversible isomerization-deamination of glucosamine 6-phosphate (GlcN6P) to form fructose 6-phosphate (Fru6P) and ammonium ion. This Bacillus cereus (strain B4264) protein is Glucosamine-6-phosphate deaminase.